Here is a 59-residue protein sequence, read N- to C-terminus: Temporin-CDYd (59 aa).

The first 22 residues, 1 to 22 (MFTLKKSMLLLLFLGTISLTLC), serve as a signal peptide directing secretion. A propeptide spanning residues 23–42 (EEERDANEEEENGGEVKEEE) is cleaved from the precursor.

This sequence belongs to the frog skin active peptide (FSAP) family. Temporin subfamily. Expressed by the skin glands.

It is found in the secreted. Functionally, antimicrobial peptide. The sequence is that of Temporin-CDYd from Rana dybowskii (Dybovsky's frog).